The chain runs to 183 residues: Ribulose bisphosphate carboxylase small subunit, chloroplastic 5 (183 aa).

The transit peptide at 1–42 (MAAAMMNKSVLLNKQCGKPAAVPKVVMSKGGFARTSAVNKNR) directs the protein to the chloroplast.

This sequence belongs to the RuBisCO small chain family. As to quaternary structure, heterohexadecamer of 8 large and 8 small subunits.

Its subcellular location is the plastid. The protein resides in the chloroplast. Its function is as follows. RuBisCO catalyzes two reactions: the carboxylation of D-ribulose 1,5-bisphosphate, the primary event in carbon dioxide fixation, as well as the oxidative fragmentation of the pentose substrate. Both reactions occur simultaneously and in competition at the same active site. Although the small subunit is not catalytic it is essential for maximal activity. The chain is Ribulose bisphosphate carboxylase small subunit, chloroplastic 5 from Acetabularia acetabulum (Mermaid's wine glass).